The following is a 110-amino-acid chain: UPF0060 membrane protein RPA3838 (110 aa).

4 helical membrane-spanning segments follow: residues 4 to 24 (LLTF…FWAW), 31 to 51 (PLWL…LTLA), 59 to 79 (AYAA…WAIE), and 85 to 105 (QWDV…LFGP).

This sequence belongs to the UPF0060 family.

The protein resides in the cell inner membrane. This is UPF0060 membrane protein RPA3838 from Rhodopseudomonas palustris (strain ATCC BAA-98 / CGA009).